Consider the following 495-residue polypeptide: MFMSSFIMAIDQGTTSSRTCIINQAGGLVAEAREAFKQIFPKPGWVEHDPEDIWYSTQRSMRLALEKAKIKGSQIRTIGITNQRETVMLWDAKSGKALHNAIVWQCRRTQDLCEKLKKNKKEKIITAKTGLVLDPYFSATKIQWLLKNVPNAAKKAKDGQALAGTVDSFLLWKLTAGHSHKTDVSNASRTMLMNIHTGWWDEDLLKIFGVPEAILPEICPSNSDFGVTQGLGFMPDGIPITGIVGDQQAALFGQTCFETGDSKCTFGTGSFLLLNTGKKAVKSKNKLLTTIAWKLKNQEMTYALEGGAFVCGAAVQWLRDGLGLIQQSSDVEALAKTVDGTDGVEFVPALTGLGAPHWQPEARGLICGLTRGSTKAHIARATLEAMALQNVDILNTMQRDLGKKLRGVRVDGGAAANDLLMQMQADYCGANVVRPQNLETTALGAAFMAGLGAGVWKDLKEIKRVWKVNKEFKVKMTPKARKERLQRWAQALERV.

ADP is bound at residue Thr14. ATP contacts are provided by Thr14, Thr15, and Ser16. Position 14 (Thr14) interacts with sn-glycerol 3-phosphate. Arg18 is an ADP binding site. Positions 84, 85, 136, and 246 each coordinate sn-glycerol 3-phosphate. Glycerol contacts are provided by Arg84, Glu85, Tyr136, Asp246, and Gln247. ADP contacts are provided by Thr268 and Gly312. The ATP site is built by Thr268, Gly312, Gln316, and Gly413. ADP is bound by residues Gly413 and Asn417.

This sequence belongs to the FGGY kinase family.

The enzyme catalyses glycerol + ATP = sn-glycerol 3-phosphate + ADP + H(+). Its pathway is polyol metabolism; glycerol degradation via glycerol kinase pathway; sn-glycerol 3-phosphate from glycerol: step 1/1. Its activity is regulated as follows. Inhibited by fructose 1,6-bisphosphate (FBP). In terms of biological role, key enzyme in the regulation of glycerol uptake and metabolism. Catalyzes the phosphorylation of glycerol to yield sn-glycerol 3-phosphate. The chain is Glycerol kinase from Bdellovibrio bacteriovorus (strain ATCC 15356 / DSM 50701 / NCIMB 9529 / HD100).